The primary structure comprises 469 residues: Properdin (469 aa).

The first 27 residues, 1 to 27, serve as a signal peptide directing secretion; that stretch reads MITEGAQAPRLLLPPLLLLLTLPATGS. TSP type-1 domains follow at residues 28–76, 77–134, 136–191, 193–255, 257–313, 315–377, and 379–462; these read DPVL…QPCR, SPRW…QCCP, MGGW…QVCP, HGAW…PPCP, AGGW…VPCP, DGEW…QHCP, and KGSW…PACK. 3 cysteine pairs are disulfide-bonded: cysteine 32-cysteine 56, cysteine 43-cysteine 72, and cysteine 57-cysteine 75. C-linked (Man) tryptophan glycans are attached at residues tryptophan 83 and tryptophan 86. 7 disulfide bridges follow: cysteine 89–cysteine 127, cysteine 93–cysteine 133, cysteine 104–cysteine 111, cysteine 132–cysteine 170, cysteine 148–cysteine 184, cysteine 152–cysteine 190, and cysteine 163–cysteine 174. O-linked (Fuc...) threonine glycosylation occurs at threonine 92. Residues tryptophan 139, tryptophan 142, and tryptophan 145 are each glycosylated (C-linked (Man) tryptophan). Residue threonine 151 is glycosylated (O-linked (Fuc...) threonine). C-linked (Man) tryptophan glycans are attached at residues tryptophan 196, tryptophan 199, and tryptophan 202. Cystine bridges form between cysteine 205/cysteine 248, cysteine 209/cysteine 254, and cysteine 224/cysteine 238. An O-linked (Fuc...) serine glycan is attached at serine 208. The disordered stretch occupies residues 219-238; sequence TRSRKCSAPEPSQKPPGKPC. C-linked (Man) tryptophan glycans are attached at residues tryptophan 260 and tryptophan 263. Cystine bridges form between cysteine 269/cysteine 306, cysteine 273/cysteine 312, and cysteine 284/cysteine 296. Threonine 272 carries an O-linked (Fuc...) threonine glycan. Tryptophan 321 and tryptophan 324 each carry a C-linked (Man) tryptophan glycan. Disulfide bonds link cysteine 327-cysteine 370, cysteine 337-cysteine 376, and cysteine 350-cysteine 360. The interval 351–359 is interaction with Complement C3 beta chain; the sequence is RGRKFDGHR. C-linked (Man) tryptophan glycosylation is found at tryptophan 382, tryptophan 385, and tryptophan 388. Intrachain disulfides connect cysteine 391–cysteine 455, cysteine 395–cysteine 461, and cysteine 407–cysteine 439. N-linked (GlcNAc...) (complex) asparagine glycosylation occurs at asparagine 428.

As to quaternary structure, in plasma, properdin exists as dimers, trimers or tetramers in the relative proportions of 26:54:20. Interacts with the pro-C3-convertase enzyme complex (C3b-Bb) comprised of Complement C3 beta chain (C3b) and the Complement factor B Bb fragment (Bb), where it binds (via its TSP type-1 5 domain) with C3b and Bb. This interaction stabilizes the complex and allows it to become the active C3-convertase enzyme complex (C3b-Bb-FP). Interacts with C3b. Interacts with CFB.

Its subcellular location is the secreted. A positive regulator of the alternate pathway (AP) of complement. It binds to and stabilizes the C3- and C5-convertase enzyme complexes. Inhibits CFI-CFH mediated degradation of Complement C3 beta chain (C3b). The sequence is that of Properdin from Homo sapiens (Human).